The following is a 229-amino-acid chain: Urease accessory protein UreG (229 aa).

The segment covering 1–15 (MPPHFIDGEPHDHQH) has biased composition (basic and acidic residues). A disordered region spans residues 1–20 (MPPHFIDGEPHDHQHDRPRR). Residue 34 to 41 (GPVGSGKT) coordinates GTP.

Belongs to the SIMIBI class G3E GTPase family. UreG subfamily. Homodimer. UreD, UreF and UreG form a complex that acts as a GTP-hydrolysis-dependent molecular chaperone, activating the urease apoprotein by helping to assemble the nickel containing metallocenter of UreC. The UreE protein probably delivers the nickel.

It is found in the cytoplasm. In terms of biological role, facilitates the functional incorporation of the urease nickel metallocenter. This process requires GTP hydrolysis, probably effectuated by UreG. The protein is Urease accessory protein UreG of Rhodococcus jostii (strain RHA1).